We begin with the raw amino-acid sequence, 839 residues long: Molybdenum cofactor sulfurase (839 aa).

Lys237 is modified (N6-(pyridoxal phosphate)lysine). The active site involves Cys401. The segment covering 651-662 has biased composition (polar residues); that stretch reads DQNYSQKQSPSM. A disordered region spans residues 651–678; that stretch reads DQNYSQKQSPSMPGSFPQAPSSPDPYPT. The MOSC domain maps to 656 to 834; sequence QKQSPSMPGS…IMVGDAVTPS (179 aa).

It belongs to the class-V pyridoxal-phosphate-dependent aminotransferase family. MOCOS subfamily. Requires pyridoxal 5'-phosphate as cofactor.

The catalysed reaction is Mo-molybdopterin + L-cysteine + AH2 = thio-Mo-molybdopterin + L-alanine + A + H2O. Its pathway is cofactor biosynthesis; molybdopterin biosynthesis. Sulfurates the molybdenum cofactor. Sulfation of molybdenum is essential for xanthine dehydrogenase (XDH) and aldehyde oxidase (ADO) enzymes in which molybdenum cofactor is liganded by 1 oxygen and 1 sulfur atom in active form. The chain is Molybdenum cofactor sulfurase from Emericella nidulans (strain FGSC A4 / ATCC 38163 / CBS 112.46 / NRRL 194 / M139) (Aspergillus nidulans).